The following is a 270-amino-acid chain: Orotidine 5'-phosphate decarboxylase (270 aa).

Catalysis depends on lysine 95, which acts as the Proton donor.

This sequence belongs to the OMP decarboxylase family. Type 2 subfamily.

It catalyses the reaction orotidine 5'-phosphate + H(+) = UMP + CO2. It participates in pyrimidine metabolism; UMP biosynthesis via de novo pathway; UMP from orotate: step 2/2. The chain is Orotidine 5'-phosphate decarboxylase from Dechloromonas aromatica (strain RCB).